Reading from the N-terminus, the 416-residue chain is Alpha-1,3/1,6-mannosyltransferase ALG2 (416 aa).

Topologically, residues 1-84 (MAEEQGRERD…LPRGLGWGGR (84 aa)) are cytoplasmic. An intramembrane region (helical) is located at residues 85 to 105 (GAAVCAYVRMVFLALYVLFLA). The Cytoplasmic portion of the chain corresponds to 106–416 (DEEFDVVVCD…LYRYVTKLLV (311 aa)).

This sequence belongs to the glycosyltransferase group 1 family. Glycosyltransferase 4 subfamily.

The protein resides in the endoplasmic reticulum membrane. It carries out the reaction a beta-D-Man-(1-&gt;4)-beta-D-GlcNAc-(1-&gt;4)-alpha-D-GlcNAc-diphospho-di-trans,poly-cis-dolichol + GDP-alpha-D-mannose = an alpha-D-Man-(1-&gt;3)-beta-D-Man-(1-&gt;4)-beta-D-GlcNAc-(1-&gt;4)-alpha-D-GlcNAc-diphospho-di-trans,poly-cis-dolichol + GDP + H(+). It catalyses the reaction an alpha-D-Man-(1-&gt;3)-beta-D-Man-(1-&gt;4)-beta-D-GlcNAc-(1-&gt;4)-alpha-D-GlcNAc-diphospho-di-trans,poly-cis-dolichol + GDP-alpha-D-mannose = an alpha-D-Man-(1-&gt;3)-[alpha-D-Man-(1-&gt;6)]-beta-D-Man-(1-&gt;4)-beta-D-GlcNAc-(1-&gt;4)-alpha-D-GlcNAc-diphospho-di-trans,poly-cis-dolichol + GDP + H(+). The catalysed reaction is a beta-D-Man-(1-&gt;4)-beta-D-GlcNAc-(1-&gt;4)-alpha-D-GlcNAc-diphospho-di-trans,poly-cis-dolichol + GDP-alpha-D-mannose = an alpha-D-Man-(1-&gt;6)-beta-D-Man-(1-&gt;4)-beta-D-GlcNAc-(1-&gt;4)-alpha-D-GlcNAc-diphospho-di-trans,poly-cis-dolichol + GDP + H(+). The enzyme catalyses an alpha-D-Man-(1-&gt;6)-beta-D-Man-(1-&gt;4)-beta-D-GlcNAc-(1-&gt;4)-alpha-D-GlcNAc-diphospho-di-trans,poly-cis-dolichol + GDP-alpha-D-mannose = an alpha-D-Man-(1-&gt;3)-[alpha-D-Man-(1-&gt;6)]-beta-D-Man-(1-&gt;4)-beta-D-GlcNAc-(1-&gt;4)-alpha-D-GlcNAc-diphospho-di-trans,poly-cis-dolichol + GDP + H(+). The protein operates within protein modification; protein glycosylation. Functionally, mannosyltransferase that operates in the biosynthetic pathway of dolichol-linked oligosaccharides, the glycan precursors employed in protein asparagine (N)-glycosylation. The assembly of dolichol-linked oligosaccharides begins on the cytosolic side of the endoplasmic reticulum membrane and finishes in its lumen. The sequential addition of sugars to dolichol pyrophosphate produces dolichol-linked oligosaccharides containing fourteen sugars, including two GlcNAcs, nine mannoses and three glucoses. Once assembled, the oligosaccharide is transferred from the lipid to nascent proteins by oligosaccharyltransferases. Catalyzes, on the cytoplasmic face of the endoplasmic reticulum, the addition of the second and third mannose residues to the dolichol-linked oligosaccharide chain, to produce Man3GlcNAc(2)-PP-dolichol core oligosaccharide. Man3GlcNAc(2)-PP-dolichol is a substrate for ALG11, the following enzyme in the biosynthetic pathway. While both alpha 1,3 and alpha 1,6 linkages are possible, the sequential addition of alpha 1,3 followed by alpha 1,6 is probably the preferred route. The polypeptide is Alpha-1,3/1,6-mannosyltransferase ALG2 (ALG2) (Homo sapiens (Human)).